Reading from the N-terminus, the 760-residue chain is Formin-like protein 8 (760 aa).

The signal sequence occupies residues 1–29; that stretch reads MAAMFNHPWPNLTLIYFFFIVVLPFQSLS. Positions 52–63 are enriched in pro residues; that stretch reads PLLPPSSNPSPP. The interval 52–71 is disordered; sequence PLLPPSSNPSPPSNNSSSSD. The chain crosses the membrane as a helical span at residues 78 to 98; the sequence is AVLITAASTLLVAGVFFFCLQ. The interval 204–313 is disordered; it reads TEIPLLRGRS…VKLKPLHWDK (110 aa). The span at 253 to 274 shows a compositional bias: pro residues; sequence TPSPPPPIKKGSSPSPPPPPPV. Residues 296 to 732 enclose the FH2 domain; the sequence is SGGETSKQVK…GSPISPSSQR (437 aa).

This sequence belongs to the formin-like family. Class-I subfamily. As to quaternary structure, interacts with profilin.

The protein localises to the cell membrane. In terms of biological role, might be involved in the organization and polarity of the actin cytoskeleton. Interacts with the barbed end of actin filaments and nucleates actin-filament polymerization in vitro. The chain is Formin-like protein 8 (FH8) from Arabidopsis thaliana (Mouse-ear cress).